The chain runs to 277 residues: MLLNILDIQAKKGLEKIACLTAYTFPMARILDEHCDLILVGDSVGQTVYGMESTLSVTLDIMIAHGKAVVKARSKALVVVDMPFASYYTPELAYKNASRILSETGCDAVKLEGGVCVAEEIAFLVARGIPVMGHVGLMPQHFNQLGGYKCQGKTDSSRQHIKEDAKAVCEAGAFCVVLECISPSLAAELTQELPVPTIGIGASNACDGQILVVDDMLGQSSRYPKFVKRFADLEHTIKDAVVGYVRAVKCSEFPGDEHCYSDGPHLRVFRAHPHHAQ.

Mg(2+)-binding residues include aspartate 42 and aspartate 81. Residues 42 to 43, aspartate 81, and lysine 110 contribute to the 3-methyl-2-oxobutanoate site; that span reads DS. Mg(2+) is bound at residue glutamate 112. Residue glutamate 179 is the Proton acceptor of the active site.

It belongs to the PanB family. As to quaternary structure, homodecamer; pentamer of dimers. Mg(2+) serves as cofactor.

The protein localises to the cytoplasm. The catalysed reaction is 3-methyl-2-oxobutanoate + (6R)-5,10-methylene-5,6,7,8-tetrahydrofolate + H2O = 2-dehydropantoate + (6S)-5,6,7,8-tetrahydrofolate. It participates in cofactor biosynthesis; (R)-pantothenate biosynthesis; (R)-pantoate from 3-methyl-2-oxobutanoate: step 1/2. Its function is as follows. Catalyzes the reversible reaction in which hydroxymethyl group from 5,10-methylenetetrahydrofolate is transferred onto alpha-ketoisovalerate to form ketopantoate. This chain is 3-methyl-2-oxobutanoate hydroxymethyltransferase, found in Anaplasma marginale (strain Florida).